Here is a 519-residue protein sequence, read N- to C-terminus: ATP synthase subunit alpha (519 aa).

Residue 175 to 182 (GDRQTGKT) coordinates ATP.

It belongs to the ATPase alpha/beta chains family. F-type ATPases have 2 components, CF(1) - the catalytic core - and CF(0) - the membrane proton channel. CF(1) has five subunits: alpha(3), beta(3), gamma(1), delta(1), epsilon(1). CF(0) has three main subunits: a(1), b(2) and c(9-12). The alpha and beta chains form an alternating ring which encloses part of the gamma chain. CF(1) is attached to CF(0) by a central stalk formed by the gamma and epsilon chains, while a peripheral stalk is formed by the delta and b chains.

The protein localises to the cell inner membrane. It catalyses the reaction ATP + H2O + 4 H(+)(in) = ADP + phosphate + 5 H(+)(out). Functionally, produces ATP from ADP in the presence of a proton gradient across the membrane. The alpha chain is a regulatory subunit. This is ATP synthase subunit alpha from Acinetobacter baylyi (strain ATCC 33305 / BD413 / ADP1).